The following is a 132-amino-acid chain: MDVTRLLLATLLVFLCFFTAYSHPPPEEKLRDDRSLRSNSSVNLLDFPSVSIVALNKNSKQISRKEAEKKRSSKKEASMKKVARPRTPLSAPCVATRDSCKSPAPACCDPCASCQCRFFRSACSCRVLSLNC.

The first 22 residues, 1–22 (MDVTRLLLATLLVFLCFFTAYS), serve as a signal peptide directing secretion. Asn-39 carries N-linked (GlcNAc...) asparagine glycosylation. The segment at 61-87 (QISRKEAEKKRSSKKEASMKKVARPRT) is disordered. Positions 63 to 79 (SRKEAEKKRSSKKEASM) are enriched in basic and acidic residues. 5 cysteine pairs are disulfide-bonded: Cys-93/Cys-108, Cys-100/Cys-114, Cys-107/Cys-125, Cys-111/Cys-132, and Cys-116/Cys-123. The region spanning 93-132 (CVATRDSCKSPAPACCDPCASCQCRFFRSACSCRVLSLNC) is the Agouti domain.

The protein resides in the secreted. Its function is as follows. Involved in the regulation of melanogenesis. The binding of ASP to MC1R precludes alpha-MSH initiated signaling and thus blocks production of cAMP, leading to a down-regulation of eumelanogenesis (brown/black pigment) and thus increasing synthesis of pheomelanin (yellow/red pigment). The polypeptide is Agouti-signaling protein (ASIP) (Macaca nigra (Celebes black macaque)).